The chain runs to 1820 residues: Kinesin-like protein KIF20B (1820 aa).

Positions 58-479 constitute a Kinesin motor domain; sequence YLQVCLRIRP…LKFSAIAQKV (422 aa). Residue 152 to 159 coordinates ATP; the sequence is GLTNSGKT. Ser-488 carries the post-translational modification Phosphoserine. Coiled-coil stretches lie at residues 523 to 603 and 674 to 793; these read ENSL…KIRE and GFED…MENT. At Thr-560 the chain carries Phosphothreonine. The segment at 829–866 is disordered; sequence SERKRVNENELQQDEPPAKKGSIHVSSAITEDQKKSEE. Phosphoserine is present on Ser-997. The tract at residues 1050–1107 is necessary and sufficient for interaction with SHTN1; sequence ENSFHSSIEAIWEECKEIVKASSKKSHQIEELEQQIEKLQAEVKGYKDENNRLKEKEH. A compositionally biased stretch (basic and acidic residues) spans 1247 to 1264; that stretch reads EEEEETNRQETEKLKEEL. The tract at residues 1247–1275 is disordered; sequence EEEEETNRQETEKLKEELSASSARTQNLK. Positions 1265–1274 are enriched in polar residues; the sequence is SASSARTQNL. An interaction with PIN1 region spans residues 1560–1820; sequence IETQIMDIKP…KRRLRTKTAK (261 aa). Ser-1588 is modified (phosphoserine). Phosphothreonine; by CDK1 is present on Thr-1644. 3 positions are modified to phosphoserine: Ser-1658, Ser-1715, and Ser-1740. A compositionally biased stretch (polar residues) spans 1760–1772; it reads LSNVEASKENVSQ. A disordered region spans residues 1760 to 1781; that stretch reads LSNVEASKENVSQPKRAKRKLY.

Belongs to the TRAFAC class myosin-kinesin ATPase superfamily. Kinesin family. As to quaternary structure, oligomerizes (via kinesin motor domain). Associates with microtubules. Interacts (via C-terminal globular tail region) with PIN1 (via WW domain). Interacts with PRC1. Interacts with SHTN1 (via N-terminus); the interaction is direct and promotes the association of SHTN1 to microtubules in primary neurons. Phosphorylated during mitosis by CDK1. Brain, ovary, kidney and testis (at protein level). Overexpressed in bladder cancer cells (at protein level). Expressed in testis. Overexpressed in bladder cancer cells.

The protein resides in the nucleus. It is found in the cytoplasm. The protein localises to the cytoskeleton. Its subcellular location is the microtubule organizing center. It localises to the centrosome. The protein resides in the nucleolus. It is found in the nucleoplasm. The protein localises to the spindle. Its subcellular location is the spindle pole. It localises to the midbody. The protein resides in the cell projection. It is found in the axon. The protein localises to the growth cone. Plus-end-directed motor enzyme that is required for completion of cytokinesis. Required for proper midbody organization and abscission in polarized cortical stem cells. Plays a role in the regulation of neuronal polarization by mediating the transport of specific cargos. Participates in the mobilization of SHTN1 and in the accumulation of PIP3 in the growth cone of primary hippocampal neurons in a tubulin and actin-dependent manner. In the developing telencephalon, cooperates with SHTN1 to promote both the transition from the multipolar to the bipolar stage and the radial migration of cortical neurons from the ventricular zone toward the superficial layer of the neocortex. Involved in cerebral cortex growth. Acts as an oncogene for promoting bladder cancer cells proliferation, apoptosis inhibition and carcinogenic progression. The chain is Kinesin-like protein KIF20B from Homo sapiens (Human).